The following is a 422-amino-acid chain: Serine hydroxymethyltransferase (422 aa).

Position 120 to 122 (G120 to I122) interacts with (6S)-5,6,7,8-tetrahydrofolate. K226 is subject to N6-(pyridoxal phosphate)lysine. E241 provides a ligand contact to (6S)-5,6,7,8-tetrahydrofolate.

The protein belongs to the SHMT family. In terms of assembly, homodimer. It depends on pyridoxal 5'-phosphate as a cofactor.

Its subcellular location is the cytoplasm. The catalysed reaction is 5,10-methylenetetrahydromethanopterin + glycine + H2O = 5,6,7,8-tetrahydromethanopterin + L-serine. It functions in the pathway amino-acid biosynthesis; glycine biosynthesis; glycine from L-serine: step 1/1. In terms of biological role, catalyzes the reversible interconversion of serine and glycine with tetrahydromethanopterin (H4MPT) serving as the one-carbon carrier. Also exhibits a pteridine-independent aldolase activity toward beta-hydroxyamino acids, producing glycine and aldehydes, via a retro-aldol mechanism. The polypeptide is Serine hydroxymethyltransferase (Methanosphaera stadtmanae (strain ATCC 43021 / DSM 3091 / JCM 11832 / MCB-3)).